Reading from the N-terminus, the 510-residue chain is Major facilitator superfamily domain-containing protein 4A (510 aa).

The next 12 membrane-spanning stretches (helical) occupy residues 19–39 (LTYWSVFFSFGLCIAFLGPTL), 53–73 (ISWVFFSQQLCLLLGSALGGV), 82–102 (LWALFTSTLVISLVFAVIPFC), 107–127 (VLASVIALAGLAMGCIDTVAN), 139–159 (AFFLQVLHFFVGLGALLSPLI), 218–238 (YAFWIMALINLPVPLAVLFLL), 303–323 (FFAIHITAALVLFMTDGMMGA), 345–365 (GYLPSLFWGFITLGRFISIPV), 380–400 (VGVVVTFLMLLIFSYNVIFLF), 401–421 (VGTASLGLFLSSTFPSMLAYT), 434–454 (VLVTGAGIGEMVLQMLVGLIF), and 462–482 (FLVCGVIFGCLAFIFYILLLF).

Belongs to the major facilitator superfamily.

Its subcellular location is the membrane. The chain is Major facilitator superfamily domain-containing protein 4A from Mus musculus (Mouse).